The primary structure comprises 251 residues: Flap endonuclease Xni (251 aa).

D104 contacts Mg(2+). The 90-residue stretch at 160–249 (VQPQQLPDYW…IDGNLQQLRL (90 aa)) folds into the 5'-3' exonuclease domain. The K(+) site is built by L171, A172, P180, V182, and I185. The segment at 184 to 189 (GIGPKS) is interaction with DNA.

This sequence belongs to the Xni family. Mg(2+) is required as a cofactor. Requires K(+) as cofactor.

Its function is as follows. Has flap endonuclease activity. During DNA replication, flap endonucleases cleave the 5'-overhanging flap structure that is generated by displacement synthesis when DNA polymerase encounters the 5'-end of a downstream Okazaki fragment. This Escherichia coli O139:H28 (strain E24377A / ETEC) protein is Flap endonuclease Xni.